An 81-amino-acid polypeptide reads, in one-letter code: Photosystem I iron-sulfur center (81 aa).

4Fe-4S ferredoxin-type domains lie at 2-31 (AHAVKIYDTCIGCTQCVRACPTDVLEMIPW) and 39-68 (IASAPRTEDCVGCKRCESRCPTDFLSVRVY). Residues C11, C14, C17, C21, C48, C51, C54, and C58 each coordinate [4Fe-4S] cluster.

In terms of assembly, the eukaryotic PSI reaction center is composed of at least 11 subunits. [4Fe-4S] cluster serves as cofactor.

Its subcellular location is the plastid. The protein resides in the chloroplast thylakoid membrane. The catalysed reaction is reduced [plastocyanin] + hnu + oxidized [2Fe-2S]-[ferredoxin] = oxidized [plastocyanin] + reduced [2Fe-2S]-[ferredoxin]. In terms of biological role, apoprotein for the two 4Fe-4S centers FA and FB of photosystem I (PSI); essential for photochemical activity. FB is the terminal electron acceptor of PSI, donating electrons to ferredoxin. The C-terminus interacts with PsaA/B/D and helps assemble the protein into the PSI complex. Required for binding of PsaD and PsaE to PSI. PSI is a plastocyanin-ferredoxin oxidoreductase, converting photonic excitation into a charge separation, which transfers an electron from the donor P700 chlorophyll pair to the spectroscopically characterized acceptors A0, A1, FX, FA and FB in turn. This Marchantia polymorpha (Common liverwort) protein is Photosystem I iron-sulfur center.